A 417-amino-acid chain; its full sequence is Phosphoglycerate kinase (417 aa).

14 residues coordinate (2R)-3-phosphoglycerate: Val-23, Asp-24, Phe-25, Asn-26, Gln-39, Arg-40, Ser-63, His-64, Gly-66, Arg-67, Leu-122, Arg-123, His-170, and Arg-171. Position 203 is a phosphoserine (Ser-203). Gly-214 provides a ligand contact to ADP. A CDP-binding site is contributed by Gly-214. Positions 215 and 216 each coordinate AMP. Ala-215 serves as a coordination point for ATP. Ala-215 lines the Mg(2+) pocket. Asp-219 provides a ligand contact to CDP. Mg(2+) is bound at residue Asp-219. Residue Lys-220 participates in AMP binding. Lys-220 contributes to the ATP binding site. Gly-238 contacts ADP. Gly-238 provides a ligand contact to CDP. Residues Ala-239 and Gly-313 each coordinate AMP. ATP is bound by residues Ala-239 and Gly-313. Positions 338 and 343 each coordinate CDP. Phe-343 contacts ADP. Glu-344 is an AMP binding site. Positions 344, 375, and 376 each coordinate ATP. Asp-375 contributes to the Mg(2+) binding site.

This sequence belongs to the phosphoglycerate kinase family. As to quaternary structure, monomer. Mg(2+) is required as a cofactor. Post-translationally, dephosphorylated by PTC1 and PTC2 at Ser-203; the protein is cytosolic when dephosphorylated.

The protein resides in the cytoplasm. It is found in the cytosol. The protein localises to the mitochondrion. It carries out the reaction (2R)-3-phosphoglycerate + ATP = (2R)-3-phospho-glyceroyl phosphate + ADP. The protein operates within carbohydrate degradation; glycolysis; pyruvate from D-glyceraldehyde 3-phosphate: step 2/5. Its function is as follows. Catalyzes one of the two ATP producing reactions in the glycolytic pathway via the reversible conversion of 1,3-diphosphoglycerate to 3-phosphoglycerate. Both L- and D- forms of purine and pyrimidine nucleotides can be used as substrates, but the activity is much lower on pyrimidines. Negatively regulates the biosynthesis of acetyl-CoA from pyruvate in the mitochondrion and consequently also attenuates aflatoxin production. This chain is Phosphoglycerate kinase, found in Aspergillus flavus (strain ATCC 200026 / FGSC A1120 / IAM 13836 / NRRL 3357 / JCM 12722 / SRRC 167).